Consider the following 526-residue polypeptide: Berberine bridge enzyme-like 11 (526 aa).

The signal sequence occupies residues 1 to 21 (MEKLLIICMLLISVLVATSQS). Cys31 and Cys94 are oxidised to a cystine. 4 N-linked (GlcNAc...) asparagine glycosylation sites follow: Asn52, Asn136, Asn273, and Asn482. One can recognise an FAD-binding PCMH-type domain in the interval 72–247 (TTPKPIAIIT…MGYKIRLVPV (176 aa)). Positions 109-171 (HDFEGLSYTS…NVLGFPAGLC (63 aa)) form a cross-link, 6-(S-cysteinyl)-8alpha-(pros-histidyl)-FAD (His-Cys).

This sequence belongs to the oxygen-dependent FAD-linked oxidoreductase family. The cofactor is FAD. Post-translationally, the FAD cofactor is bound via a bicovalent 6-S-cysteinyl, 8alpha-N1-histidyl FAD linkage.

The protein resides in the secreted. The protein localises to the cell wall. This is Berberine bridge enzyme-like 11 from Arabidopsis thaliana (Mouse-ear cress).